A 345-amino-acid chain; its full sequence is Histidinol-phosphate aminotransferase (345 aa).

Residue K205 is modified to N6-(pyridoxal phosphate)lysine.

The protein belongs to the class-II pyridoxal-phosphate-dependent aminotransferase family. Histidinol-phosphate aminotransferase subfamily. Homodimer. The cofactor is pyridoxal 5'-phosphate.

It carries out the reaction L-histidinol phosphate + 2-oxoglutarate = 3-(imidazol-4-yl)-2-oxopropyl phosphate + L-glutamate. Its pathway is amino-acid biosynthesis; L-histidine biosynthesis; L-histidine from 5-phospho-alpha-D-ribose 1-diphosphate: step 7/9. The protein is Histidinol-phosphate aminotransferase of Parabacteroides distasonis (strain ATCC 8503 / DSM 20701 / CIP 104284 / JCM 5825 / NCTC 11152).